Reading from the N-terminus, the 790-residue chain is Endonuclease MutS2 (790 aa).

Position 334–341 (334–341 (GPNTGGKT)) interacts with ATP. The 76-residue stretch at 713-788 (LDVRGMTLDD…GDGVTIVELH (76 aa)) folds into the Smr domain.

The protein belongs to the DNA mismatch repair MutS family. MutS2 subfamily. As to quaternary structure, homodimer. Binds to stalled ribosomes, contacting rRNA.

Functionally, endonuclease that is involved in the suppression of homologous recombination and thus may have a key role in the control of bacterial genetic diversity. In terms of biological role, acts as a ribosome collision sensor, splitting the ribosome into its 2 subunits. Detects stalled/collided 70S ribosomes which it binds and splits by an ATP-hydrolysis driven conformational change. Acts upstream of the ribosome quality control system (RQC), a ribosome-associated complex that mediates the extraction of incompletely synthesized nascent chains from stalled ribosomes and their subsequent degradation. Probably generates substrates for RQC. The chain is Endonuclease MutS2 from Caldanaerobacter subterraneus subsp. tengcongensis (strain DSM 15242 / JCM 11007 / NBRC 100824 / MB4) (Thermoanaerobacter tengcongensis).